Reading from the N-terminus, the 141-residue chain is Large ribosomal subunit protein uL11 (141 aa).

Belongs to the universal ribosomal protein uL11 family. In terms of assembly, part of the ribosomal stalk of the 50S ribosomal subunit. Interacts with L10 and the large rRNA to form the base of the stalk. L10 forms an elongated spine to which L12 dimers bind in a sequential fashion forming a multimeric L10(L12)X complex. Post-translationally, one or more lysine residues are methylated.

In terms of biological role, forms part of the ribosomal stalk which helps the ribosome interact with GTP-bound translation factors. In Lactobacillus acidophilus (strain ATCC 700396 / NCK56 / N2 / NCFM), this protein is Large ribosomal subunit protein uL11.